The primary structure comprises 193 residues: Cysteine and glycine-rich protein 1 (193 aa).

The LIM zinc-binding 1 domain maps to 10–61; the sequence is CGVCQKTVYFAEEVQCEGNSFHKSCFLCMVCKKNLDSTTVAVHGEEIYCKSC. The short motif at 64–69 is the Nuclear localization signal element; that stretch reads KKYGPK. At Ser81 the chain carries Phosphoserine. An N6-acetyllysine modification is found at Lys84. Residue Lys91 forms a Glycyl lysine isopeptide (Lys-Gly) (interchain with G-Cter in SUMO2) linkage. An N6-acetyllysine mark is found at Lys112, Lys131, Lys137, and Lys161. One can recognise an LIM zinc-binding 2 domain in the interval 119-170; the sequence is CPRCSQAVYAAEKVIGAGKSWHKACFRCAKCGKGLESTTLADKDGEIYCKGC. Position 192 is a phosphoserine (Ser192).

As to quaternary structure, interacts with ASCC1; ASCC2 and TRIP4.

The protein resides in the nucleus. In terms of biological role, could play a role in neuronal development. The protein is Cysteine and glycine-rich protein 1 (CSRP1) of Homo sapiens (Human).